The chain runs to 624 residues: Probable Xaa-Pro aminopeptidase P (624 aa).

The Mn(2+) site is built by Asp-414, Asp-425, Glu-530, and Glu-544.

The protein belongs to the peptidase M24B family. The cofactor is Mn(2+).

The catalysed reaction is Release of any N-terminal amino acid, including proline, that is linked to proline, even from a dipeptide or tripeptide.. In terms of biological role, catalyzes the removal of a penultimate prolyl residue from the N-termini of peptides. This chain is Probable Xaa-Pro aminopeptidase P (AMPP), found in Chaetomium globosum (strain ATCC 6205 / CBS 148.51 / DSM 1962 / NBRC 6347 / NRRL 1970) (Soil fungus).